A 158-amino-acid chain; its full sequence is Succinate dehydrogenase [ubiquinone] cytochrome b small subunit B, mitochondrial (158 aa).

A mitochondrion-targeting transit peptide spans 1–29 (MAALVRISSLCHRGVSPLLFRPSSLIRPL). Residues 30–62 (AVQQKDHDCSYLISARIHATPSNYAGSGSKAAT) lie on the Mitochondrial matrix side of the membrane. Residues 63–84 (MHWTGERILSIALLSLAPVAYF) form a helical membrane-spanning segment. Residues 85–89 (CPSPA) lie on the Mitochondrial intermembrane side of the membrane. The chain crosses the membrane as a helical span at residues 90–110 (VDYSLAAALTLHGHWGLGQVV). His101 serves as a coordination point for heme b. The Mitochondrial matrix portion of the chain corresponds to 111-119 (TDYVHGDAK). Residue Tyr113 participates in a ubiquinone binding. A helical membrane pass occupies residues 120 to 141 (IKMANAGLFVLSTVTFAGLCYF). Over 142–158 (NYHDVGICKAVALLWSK) the chain is Mitochondrial intermembrane.

The protein belongs to the CybS family. Component of complex II composed of four subunits: the flavoprotein (FP) SDHA, iron-sulfur protein (IP) SDHB, and a cytochrome b560 composed of SDHC and SDHD.

The protein localises to the mitochondrion inner membrane. Its pathway is carbohydrate metabolism; tricarboxylic acid cycle. Functionally, membrane-anchoring subunit of succinate dehydrogenase (SDH) that is involved in complex II of the mitochondrial electron transport chain and is responsible for transferring electrons from succinate to ubiquinone (coenzyme Q). SDH also oxidizes malate to the non-canonical enol form of oxaloacetate, enol-oxaloacetate. Enol-oxaloacetate, which is a potent inhibitor of the succinate dehydrogenase activity, is further isomerized into keto-oxaloacetate. In Danio rerio (Zebrafish), this protein is Succinate dehydrogenase [ubiquinone] cytochrome b small subunit B, mitochondrial (sdhdb).